A 272-amino-acid chain; its full sequence is Phosphate import ATP-binding protein PstB (272 aa).

The 248-residue stretch at Val20–Ile267 folds into the ABC transporter domain. Gly58–Ser65 contacts ATP.

Belongs to the ABC transporter superfamily. Phosphate importer (TC 3.A.1.7) family. In terms of assembly, the complex is composed of two ATP-binding proteins (PstB), two transmembrane proteins (PstC and PstA) and a solute-binding protein (PstS).

Its subcellular location is the cell membrane. The enzyme catalyses phosphate(out) + ATP + H2O = ADP + 2 phosphate(in) + H(+). Part of the ABC transporter complex PstSACB involved in phosphate import. Responsible for energy coupling to the transport system. The chain is Phosphate import ATP-binding protein PstB from Geobacillus kaustophilus (strain HTA426).